The chain runs to 159 residues: Regulatory protein RecX (159 aa).

The protein belongs to the RecX family.

The protein localises to the cytoplasm. Modulates RecA activity. The chain is Regulatory protein RecX from Acinetobacter baylyi (strain ATCC 33305 / BD413 / ADP1).